The primary structure comprises 689 residues: Methionine--tRNA ligase (689 aa).

The short motif at 13-23 (PYANGNFHIGH) is the 'HIGH' region element. Zn(2+) contacts are provided by C144, C147, C157, and C160. The 'KMSKS' region signature appears at 341 to 345 (KMSKS). K344 is a binding site for ATP. The 107-residue stretch at 583 to 689 (DFAKVDLRIA…PGASPGLRVR (107 aa)) folds into the tRNA-binding domain.

Belongs to the class-I aminoacyl-tRNA synthetase family. MetG type 1 subfamily. Homodimer. It depends on Zn(2+) as a cofactor.

Its subcellular location is the cytoplasm. It catalyses the reaction tRNA(Met) + L-methionine + ATP = L-methionyl-tRNA(Met) + AMP + diphosphate. Is required not only for elongation of protein synthesis but also for the initiation of all mRNA translation through initiator tRNA(fMet) aminoacylation. In Polaromonas sp. (strain JS666 / ATCC BAA-500), this protein is Methionine--tRNA ligase.